The following is a 556-amino-acid chain: Polypyrimidine tract-binding protein 1 (556 aa).

Position 1 is an N-acetylmethionine (Met1). Ser16 is modified (phosphoserine). Positions 35-54 (ASAANGNDSKKFKGDNRSTG) are disordered. RRM domains follow at residues 58-142 (RVIH…SSPN), 183-259 (LRII…FSKL), and 362-436 (SVLL…LSKH). Lys64 participates in a covalent cross-link: Glycyl lysine isopeptide (Lys-Gly) (interchain with G-Cter in SUMO2). A Phosphotyrosine modification is found at Tyr126. A Phosphothreonine modification is found at Thr137. Residue Ser140 is modified to Phosphoserine. A Glycyl lysine isopeptide (Lys-Gly) (interchain with G-Cter in SUMO2) cross-link involves residue Lys217. The segment at 436 to 458 (HQSVQLPREGQEDQGLTKDYGSS) is disordered. Residue Ser458 is modified to Phosphoserine. The RRM 4 domain maps to 479–554 (ATLHLSNIPP…HHLRVSFSKS (76 aa)).

As to quaternary structure, monomer. Part of a ternary complex containing KHSRP, PTBP1, PTBP2 and HNRPH1. Interacts with RAVER1 and SFPQ.

Its subcellular location is the nucleus. Functionally, plays a role in pre-mRNA splicing and in the regulation of alternative splicing events. Activates exon skipping of its own pre-mRNA during muscle cell differentiation. Binds to the polypyrimidine tract of introns. May promote RNA looping when bound to two separate polypyrimidine tracts in the same pre-mRNA. May promote the binding of U2 snRNP to pre-mRNA. Cooperates with RAVER1 to modulate switching between mutually exclusive exons during maturation of the TPM1 pre-mRNA. Represses the splicing of MAPT/Tau exon 10. Binds to polypyrimidine-rich controlling element (PCE) of CFTR and promotes exon skipping of CFTR exon 9, thereby antagonizing TIA1 and its role in exon inclusion of CFTR exon 9. Plays a role in the splicing of pyruvate kinase PKM by binding repressively to a polypyrimidine tract flanking PKM exon 9, inhibiting exon 9 inclusion and resulting in exon 10 inclusion and production of the PKM M2 isoform. This chain is Polypyrimidine tract-binding protein 1 (Ptbp1), found in Rattus norvegicus (Rat).